Here is a 134-residue protein sequence, read N- to C-terminus: C-C motif chemokine 21 (134 aa).

The signal sequence occupies residues 1–23 (MAQSLALSLLILVLAFGIPRTQG). 3 disulfide bridges follow: cysteine 31–cysteine 57, cysteine 32–cysteine 75, and cysteine 103–cysteine 122. Residues 88–134 (QHLDKTPSPQKPAQGCRKDRGASKTGKKGKGSKGCKRTERSQTPKGP) form a disordered region. Residues 98 to 134 (KPAQGCRKDRGASKTGKKGKGSKGCKRTERSQTPKGP) form a C-terminal basic extension region. A compositionally biased stretch (basic residues) spans 112–122 (TGKKGKGSKGC). Residues 123-134 (KRTERSQTPKGP) show a composition bias toward basic and acidic residues.

The protein belongs to the intercrine beta (chemokine CC) family. As to quaternary structure, monomer. Binds to CCR7. Interacts with PDPN; relocalizes PDPN to the basolateral membrane. Interacts with TNFAIP6 (via Link domain). Interacts with GPR174. As to expression, highly expressed in high endothelial venules of lymph nodes, spleen and appendix. Intermediate levels found in small intestine, thyroid gland and trachea. Low level expression in thymus, bone marrow, liver, and pancreas. Also found in tonsil, fetal heart and fetal spleen.

It is found in the secreted. Functionally, inhibits hemopoiesis and stimulates chemotaxis. Chemotactic in vitro for thymocytes and activated T-cells, but not for B-cells, macrophages, or neutrophils. Shows preferential activity towards naive T-cells. May play a role in mediating homing of lymphocytes to secondary lymphoid organs. Binds to atypical chemokine receptor ACKR4 and mediates the recruitment of beta-arrestin (ARRB1/2) to ACKR4. This chain is C-C motif chemokine 21 (CCL21), found in Homo sapiens (Human).